We begin with the raw amino-acid sequence, 714 residues long: Methylmalonyl-CoA mutase (714 aa).

The B12-binding domain occupies 584–714 (RPRILIAKMG…VLNLISQHHD (131 aa)). An adenosylcob(III)alamin-binding site is contributed by histidine 597.

It belongs to the methylmalonyl-CoA mutase family. As to quaternary structure, homodimer. Interacts with ArgK. It depends on adenosylcob(III)alamin as a cofactor.

The enzyme catalyses (R)-methylmalonyl-CoA = succinyl-CoA. Catalyzes the interconversion of succinyl-CoA and methylmalonyl-CoA. Could be part of a pathway that converts succinate to propionate. This Escherichia coli (strain K12) protein is Methylmalonyl-CoA mutase (scpA).